Here is a 211-residue protein sequence, read N- to C-terminus: Large ribosomal subunit protein uL4 (211 aa).

Residues 48–89 form a disordered region; sequence KRAGTASTKTRVEVRGGGAKPWRQKGTGRARAGSRTSPLWRG.

It belongs to the universal ribosomal protein uL4 family. As to quaternary structure, part of the 50S ribosomal subunit.

One of the primary rRNA binding proteins, this protein initially binds near the 5'-end of the 23S rRNA. It is important during the early stages of 50S assembly. It makes multiple contacts with different domains of the 23S rRNA in the assembled 50S subunit and ribosome. Functionally, forms part of the polypeptide exit tunnel. The sequence is that of Large ribosomal subunit protein uL4 from Desulfotalea psychrophila (strain LSv54 / DSM 12343).